The chain runs to 434 residues: MGETKVIRIEDVSKFVGQTVKIGVWLRQKRGSGKIAFLQLRDGTGFMQGVVSVGDVDEATFKLAEHLKQESSFYVTGEIHQDSRSEFGFEMAVSDIEIVGESEDYPITPKEHGTDFLFDERHLYLRHQKPFATMKIRDEIIRAIYDFFHKDGFLKLDSPIITDSAPEGTTELFPVKYFDKDAYLSQTGQLYAEAGAMAFGKVYDFGPTFRAEKSSTRRHLTEFWMIDAEMAWMHQEDSLKVQERFIAYLIERVVDNCQVELKMLGRDVEKLRAYTKLPYPRISYDDAVKLLQDNDFKIEWGVDFGSPEETFLAKRFNSPFFIVNFPKAIKAFYMKRPPSRDDVVISADMLAPEGYGEIIGGSERDTDYDYLKQQIISQHLDLSEYSWYLDLRKYGTVPHSGFGLGLERLIRFIAGEDHIRETIPFPRTLNRLHP.

The protein belongs to the class-II aminoacyl-tRNA synthetase family. In terms of assembly, homodimer.

The protein resides in the cytoplasm. The catalysed reaction is tRNA(Asn) + L-asparagine + ATP = L-asparaginyl-tRNA(Asn) + AMP + diphosphate + H(+). The sequence is that of Asparagine--tRNA ligase from Oenococcus oeni (strain ATCC BAA-331 / PSU-1).